Consider the following 201-residue polypeptide: Glycerol-3-phosphate acyltransferase (201 aa).

A run of 6 helical transmembrane segments spans residues 10–30 (MLIG…GLIL), 60–80 (LAAA…LIAA), 86–106 (AAIA…WIGF), 116–136 (LGVL…AWIV), 139–159 (LLTR…PIAL), and 166–186 (ALAA…RANI).

It belongs to the PlsY family. Probably interacts with PlsX.

The protein localises to the cell inner membrane. It carries out the reaction an acyl phosphate + sn-glycerol 3-phosphate = a 1-acyl-sn-glycero-3-phosphate + phosphate. It participates in lipid metabolism; phospholipid metabolism. In terms of biological role, catalyzes the transfer of an acyl group from acyl-phosphate (acyl-PO(4)) to glycerol-3-phosphate (G3P) to form lysophosphatidic acid (LPA). This enzyme utilizes acyl-phosphate as fatty acyl donor, but not acyl-CoA or acyl-ACP. This chain is Glycerol-3-phosphate acyltransferase, found in Brucella ovis (strain ATCC 25840 / 63/290 / NCTC 10512).